The primary structure comprises 294 residues: ATP synthase gamma chain (294 aa).

Belongs to the ATPase gamma chain family. In terms of assembly, F-type ATPases have 2 components, CF(1) - the catalytic core - and CF(0) - the membrane proton channel. CF(1) has five subunits: alpha(3), beta(3), gamma(1), delta(1), epsilon(1). CF(0) has three main subunits: a, b and c.

The protein localises to the cell inner membrane. Functionally, produces ATP from ADP in the presence of a proton gradient across the membrane. The gamma chain is believed to be important in regulating ATPase activity and the flow of protons through the CF(0) complex. This is ATP synthase gamma chain from Rhizobium rhizogenes (strain K84 / ATCC BAA-868) (Agrobacterium radiobacter).